Consider the following 539-residue polypeptide: Glutamyl-tRNA(Gln) amidotransferase subunit A, mitochondrial (539 aa).

Catalysis depends on charge relay system residues lysine 94 and serine 181. Serine 205 acts as the Acyl-ester intermediate in catalysis.

The protein belongs to the amidase family. GatA subfamily. Subunit of the heterotrimeric GatCAB amidotransferase (AdT) complex, composed of A, B and C subunits.

The protein localises to the mitochondrion. It catalyses the reaction L-glutamyl-tRNA(Gln) + L-glutamine + ATP + H2O = L-glutaminyl-tRNA(Gln) + L-glutamate + ADP + phosphate + H(+). Functionally, allows the formation of correctly charged Gln-tRNA(Gln) through the transamidation of misacylated Glu-tRNA(Gln) in the mitochondria. The reaction takes place in the presence of glutamine and ATP through an activated gamma-phospho-Glu-tRNA(Gln). This is Glutamyl-tRNA(Gln) amidotransferase subunit A, mitochondrial from Mycosarcoma maydis (Corn smut fungus).